We begin with the raw amino-acid sequence, 439 residues long: Ribosomal protein uS12 methylthiotransferase RimO (439 aa).

The 111-residue stretch at proline 5–proline 115 folds into the MTTase N-terminal domain. 6 residues coordinate [4Fe-4S] cluster: cysteine 14, cysteine 50, cysteine 79, cysteine 146, cysteine 150, and cysteine 153. Positions leucine 132–arginine 369 constitute a Radical SAM core domain. The TRAM domain maps to lysine 372–glycine 438.

It belongs to the methylthiotransferase family. RimO subfamily. [4Fe-4S] cluster serves as cofactor.

Its subcellular location is the cytoplasm. It carries out the reaction L-aspartate(89)-[ribosomal protein uS12]-hydrogen + (sulfur carrier)-SH + AH2 + 2 S-adenosyl-L-methionine = 3-methylsulfanyl-L-aspartate(89)-[ribosomal protein uS12]-hydrogen + (sulfur carrier)-H + 5'-deoxyadenosine + L-methionine + A + S-adenosyl-L-homocysteine + 2 H(+). Functionally, catalyzes the methylthiolation of an aspartic acid residue of ribosomal protein uS12. The protein is Ribosomal protein uS12 methylthiotransferase RimO of Bradyrhizobium diazoefficiens (strain JCM 10833 / BCRC 13528 / IAM 13628 / NBRC 14792 / USDA 110).